A 519-amino-acid polypeptide reads, in one-letter code: Cytochrome P450 monooxygenase apdE (519 aa).

Residues 27–47 form a helical membrane-spanning segment; the sequence is FVFFAFVVYSCFTIAVGWVVY. N-linked (GlcNAc...) asparagine glycans are attached at residues Asn327 and Asn379. Cys466 is a binding site for heme. Residue Asn508 is glycosylated (N-linked (GlcNAc...) asparagine).

This sequence belongs to the cytochrome P450 family. Heme is required as a cofactor.

It localises to the membrane. Its pathway is secondary metabolite biosynthesis. Cytochrome P450 monooxygenase; part of the gene cluster that mediates the biosynthesis of aspyridones. The polyketide-amino acid backbone preaspyridone A is first assembled by the PKS-NRPS hybrid apdA. The assembly of preaspyridone A is initiated by loading of malonyl-CoA onto apdA, followed by decarboxylation to yield the acetyl starter unit. The growing polyketide chain then elongates into a tetraketide. The adpA PKS module catalyzes three Claisen condensations, as well as beta-keto processing and methylation. Alpha-methylation step during polyketide synthesis is a prerequisite and a key checkpoint for chain transfer between PKS and NRPS modules. The downstream NRPS module contains the condensation (C), adenylation (A), and thiolation (T) domains and catalyzes the incorporation of tyrosine via the formation of the L-tyrosinyl-thioester and the amide linkage between L-tyrosinyl-thioester and the tetraketide. The bimodular assembly line is terminated with a reductase (R) domain that facilitates formation and release of the tetramic acid product. Because apdA lacks a designated enoylreductase (ER) domain, the required activity is provided the enoyl reductase apdC. ApdC appears to operate with different stereoselectivity in different PKS cycle. Combined with apdC, apdA is proposed to synthesize preaspyridone A via about 20 enzymatic steps. A number of oxidative steps performed successively by the cytochrome P450 monooxygenases apdE and apdB are required for the conversion of preaspyridone A to aspyridone A. The cytochrome P450 monooxygenase apdE is responsible for the oxidative dephenylation of preaspyridone A. Finally, the predicted FAD-dependent monooxygenase apdD and the acyl-CoA dehydrogenase apdG may be involved in the transformation of aspyridone A into aspyridone B. This Emericella nidulans (strain FGSC A4 / ATCC 38163 / CBS 112.46 / NRRL 194 / M139) (Aspergillus nidulans) protein is Cytochrome P450 monooxygenase apdE.